The chain runs to 448 residues: Trigger factor (448 aa).

One can recognise a PPIase FKBP-type domain in the interval 172 to 257 (GDRVTVDFVG…MKKIEWPHLP (86 aa)).

This sequence belongs to the FKBP-type PPIase family. Tig subfamily.

It localises to the cytoplasm. The enzyme catalyses [protein]-peptidylproline (omega=180) = [protein]-peptidylproline (omega=0). In terms of biological role, involved in protein export. Acts as a chaperone by maintaining the newly synthesized protein in an open conformation. Functions as a peptidyl-prolyl cis-trans isomerase. This Burkholderia lata (strain ATCC 17760 / DSM 23089 / LMG 22485 / NCIMB 9086 / R18194 / 383) protein is Trigger factor.